The sequence spans 173 residues: Large ribosomal subunit protein uL16 (173 aa).

It belongs to the universal ribosomal protein uL16 family.

The protein is Large ribosomal subunit protein uL16 of Methanococcus maripaludis (strain C5 / ATCC BAA-1333).